The primary structure comprises 486 residues: Bifunctional protein GlmU (486 aa).

The tract at residues 1–241 (MSASDSSSAV…ARELAGVNDR (241 aa)) is pyrophosphorylase. UDP-N-acetyl-alpha-D-glucosamine contacts are provided by residues 13–16 (LAAG), Lys27, Gln84, and 89–90 (GT). Asp114 contributes to the Mg(2+) binding site. Gly151, Glu166, Asn181, and Asn239 together coordinate UDP-N-acetyl-alpha-D-glucosamine. Asn239 serves as a coordination point for Mg(2+). A linker region spans residues 242–262 (VQLAEAGAELNRRTVEAAMRG). The N-acetyltransferase stretch occupies residues 263–486 (GATIVDPATT…AQNSVPNQEG (224 aa)). Arg344 and Lys362 together coordinate UDP-N-acetyl-alpha-D-glucosamine. His374 functions as the Proton acceptor in the catalytic mechanism. 2 residues coordinate UDP-N-acetyl-alpha-D-glucosamine: Tyr377 and Asn388. Acetyl-CoA contacts are provided by residues Ala391, 397–398 (NY), Ser416, and Ala434. Positions 464 to 486 (KRPGTAAADAAAAAQNSVPNQEG) are disordered.

In the N-terminal section; belongs to the N-acetylglucosamine-1-phosphate uridyltransferase family. The protein in the C-terminal section; belongs to the transferase hexapeptide repeat family. Homotrimer. The cofactor is Mg(2+).

It is found in the cytoplasm. The catalysed reaction is alpha-D-glucosamine 1-phosphate + acetyl-CoA = N-acetyl-alpha-D-glucosamine 1-phosphate + CoA + H(+). It catalyses the reaction N-acetyl-alpha-D-glucosamine 1-phosphate + UTP + H(+) = UDP-N-acetyl-alpha-D-glucosamine + diphosphate. The protein operates within nucleotide-sugar biosynthesis; UDP-N-acetyl-alpha-D-glucosamine biosynthesis; N-acetyl-alpha-D-glucosamine 1-phosphate from alpha-D-glucosamine 6-phosphate (route II): step 2/2. Its pathway is nucleotide-sugar biosynthesis; UDP-N-acetyl-alpha-D-glucosamine biosynthesis; UDP-N-acetyl-alpha-D-glucosamine from N-acetyl-alpha-D-glucosamine 1-phosphate: step 1/1. It functions in the pathway bacterial outer membrane biogenesis; LPS lipid A biosynthesis. Catalyzes the last two sequential reactions in the de novo biosynthetic pathway for UDP-N-acetylglucosamine (UDP-GlcNAc). The C-terminal domain catalyzes the transfer of acetyl group from acetyl coenzyme A to glucosamine-1-phosphate (GlcN-1-P) to produce N-acetylglucosamine-1-phosphate (GlcNAc-1-P), which is converted into UDP-GlcNAc by the transfer of uridine 5-monophosphate (from uridine 5-triphosphate), a reaction catalyzed by the N-terminal domain. The polypeptide is Bifunctional protein GlmU (Corynebacterium efficiens (strain DSM 44549 / YS-314 / AJ 12310 / JCM 11189 / NBRC 100395)).